The sequence spans 88 residues: Small ribosomal subunit protein bS20 (88 aa).

The segment at 1 to 20 is disordered; it reads MANTAQARKRARQAVVQNAH.

This sequence belongs to the bacterial ribosomal protein bS20 family.

Binds directly to 16S ribosomal RNA. This chain is Small ribosomal subunit protein bS20, found in Ralstonia pickettii (strain 12J).